The sequence spans 466 residues: Cysteine--tRNA ligase (466 aa).

Residue Cys-29 coordinates Zn(2+). Residues 31–41 (PTVYNYIHIGN) carry the 'HIGH' region motif. Zn(2+)-binding residues include Cys-209, His-234, and Glu-238. The short motif at 266–270 (KMSKS) is the 'KMSKS' region element. Residue Lys-269 coordinates ATP. A Phosphoserine modification is found at Ser-270.

The protein belongs to the class-I aminoacyl-tRNA synthetase family. In terms of assembly, monomer. It depends on Zn(2+) as a cofactor.

The protein localises to the cytoplasm. It carries out the reaction tRNA(Cys) + L-cysteine + ATP = L-cysteinyl-tRNA(Cys) + AMP + diphosphate. The protein is Cysteine--tRNA ligase (cysS) of Halalkalibacterium halodurans (strain ATCC BAA-125 / DSM 18197 / FERM 7344 / JCM 9153 / C-125) (Bacillus halodurans).